Here is a 686-residue protein sequence, read N- to C-terminus: Translation initiation factor IF-2 (686 aa).

The segment at 35-99 (MSTVEDETAE…EHGQKDTDRR (65 aa)) is disordered. The span at 50-68 (LQEEDKPEEKISKKEPDKK) shows a compositional bias: basic and acidic residues. Residues 69–79 (DRKKTKGKKQM) are compositionally biased toward basic residues. Residues 87–99 (EGTEHGQKDTDRR) show a composition bias toward basic and acidic residues. A tr-type G domain is found at 186-355 (LRPPIVTVMG…LLVAEMEELK (170 aa)). The G1 stretch occupies residues 195 to 202 (GHVDHGKT). Position 195-202 (195-202 (GHVDHGKT)) interacts with GTP. A G2 region spans residues 220-224 (GITQH). The segment at 241-244 (DTPG) is G3. Residues 241 to 245 (DTPGH) and 295 to 298 (NKVD) each bind GTP. A G4 region spans residues 295–298 (NKVD). A G5 region spans residues 331 to 333 (SAL).

Belongs to the TRAFAC class translation factor GTPase superfamily. Classic translation factor GTPase family. IF-2 subfamily.

It localises to the cytoplasm. One of the essential components for the initiation of protein synthesis. Protects formylmethionyl-tRNA from spontaneous hydrolysis and promotes its binding to the 30S ribosomal subunits. Also involved in the hydrolysis of GTP during the formation of the 70S ribosomal complex. This is Translation initiation factor IF-2 from Halothermothrix orenii (strain H 168 / OCM 544 / DSM 9562).